We begin with the raw amino-acid sequence, 657 residues long: Glycogen debranching enzyme (657 aa).

Asp336 (nucleophile) is an active-site residue. The Proton donor role is filled by Glu371. Residues 460-479 (ANGEENRDGTNNNYSNNHGK) form a disordered region.

Belongs to the glycosyl hydrolase 13 family.

It carries out the reaction Hydrolysis of (1-&gt;6)-alpha-D-glucosidic linkages to branches with degrees of polymerization of three or four glucose residues in limit dextrin.. It functions in the pathway glycan degradation; glycogen degradation. In terms of biological role, removes maltotriose and maltotetraose chains that are attached by 1,6-alpha-linkage to the limit dextrin main chain, generating a debranched limit dextrin. The protein is Glycogen debranching enzyme of Escherichia coli O81 (strain ED1a).